Consider the following 512-residue polypeptide: Glutathione-binding protein GsiB (512 aa).

Residues M1–A26 form the signal peptide.

This sequence belongs to the bacterial solute-binding protein 5 family. In terms of assembly, the complex is composed of two ATP-binding proteins (GsiA), two transmembrane proteins (GsiC and GsiD) and a solute-binding protein (GsiB).

The protein resides in the periplasm. In terms of biological role, part of the ABC transporter complex GsiABCD involved in glutathione import. Binds glutathione. The chain is Glutathione-binding protein GsiB from Salmonella typhi.